Here is a 312-residue protein sequence, read N- to C-terminus: Retron Ec83 reverse transcriptase (312 aa).

The region spanning 14–239 (PDFDVLLKSR…HNRHVTGVTL (226 aa)) is the Reverse transcriptase domain. Mg(2+) is bound by residues aspartate 97, aspartate 185, and aspartate 186.

This sequence belongs to the bacterial reverse transcriptase family.

The catalysed reaction is DNA(n) + a 2'-deoxyribonucleoside 5'-triphosphate = DNA(n+1) + diphosphate. Functionally, reverse transcriptase (RT) component of antiviral defense system retron Ec83, composed of a non-coding RNA (ncRNA), this reverse transcriptase (RT), a probable ATPase and a putative HNH endonuclease. Expression of retron Ec83 confers protection against bacteriophages T2, T4 and T6. At multiplicity of infection (MOI) of 0.02 cultures slow growth when infected with T4 but do not collapse, at MOI 2 cultures enter growth stasis. Responsible for synthesis of msDNA-Ec83 (a linear ssDNA with a 5'-terminal phosphate residue). Unlike most known msDNAs the mature product from the original strain does not have an RNA component. When the ncRNA plus RT are expressed in strain K12 / JM109 only linear DNA is seen in stationary phase cells, but logarithmic phase cells have both a linear and branched msDNA (a branched molecule with RNA linked by a 2',5'-phosphodiester bond to ssDNA, a 'classic' retron). The branched msDNA is probably the precursor for the mature linear msDNA, the precursor is cleaved endonucleolytically by ExoVII (xseA-xseB) leaving the observed mature 5'-phosphate ssDNA terminus. The retron transcript serves as primer (from a conserved internal G residue) and template for the reaction, and codes for the RT. Overexpression of the ncRNA and RT, which leads to increased levels of msDNA, is mutagenic in vivo. This may be due to a mismatch in the msDNA stem which binds and sequesters MutS and/or MutL. This Escherichia coli protein is Retron Ec83 reverse transcriptase.